We begin with the raw amino-acid sequence, 727 residues long: Ubiquitin carboxyl-terminal hydrolase BAP1 (727 aa).

Positions 4-235 constitute a UCH catalytic domain; the sequence is GWLELESDPG…IRFNLMAVVP (232 aa). Positions 56 to 60 match the Arg-finger motif motif; the sequence is RRSRR. The Nucleophile role is filled by C91. H169 acts as the Proton donor in catalysis. The tract at residues 273–351 is disordered; sequence THKSQESQLP…SLNGVPPTPT (79 aa). Residue S292 is modified to Phosphoserine. A compositionally biased stretch (polar residues) spans 320–330; it reads CPQTTTHSPPS. Positions 363–366 match the HBM-like motif motif; that stretch reads NHNY. Residues S369 and S394 each carry the phosphoserine modification. 2 disordered regions span residues 372 to 435 and 462 to 522; these read QEEE…DGQL and SIKT…SPVT. Residues 394–407 show a composition bias toward acidic residues; the sequence is SDDEEDYEDEEEDV. Composition is skewed to polar residues over residues 426–435 and 478–522; these read SLSNSSDGQL and THSQ…SPVT. A Phosphothreonine modification is found at T491. Phosphoserine is present on residues S519, S535, S583, and S595. The disordered stretch occupies residues 573 to 622; that stretch reads LTEGGKGSSPSTRSSQGSQGSSSLEEKEVVEVTDSRDKSGLNRSSEPLSG. Positions 580-595 are enriched in low complexity; it reads SSPSTRSSQGSQGSSS. The interval 594-719 is interaction with BRCA1; that stretch reads SSLEEKEVVE…QRKPDRRKRS (126 aa). Residues 596 to 612 are compositionally biased toward basic and acidic residues; it reads LEEKEVVEVTDSRDKSG. Residues 628–659 are a coiled coil; that stretch reads KELLALLKCVEAEIANYEACLKEEVEKRKKFK. The tract at residues 640–684 is interaction with YY1; it reads EIANYEACLKEEVEKRKKFKIDDQRRTHNYDEFICTFISMLAQEG. In terms of domain architecture, ULD spans 668 to 696; it reads NYDEFICTFISMLAQEGMLANLVEQNISV. The interval 697-699 is interaction with nucleosomal DNA forming a DNA clamp with ASXL1; it reads RRR. The short motif at 697–720 is the Classical bipartite Nuclear localization signal (NLS) element; it reads RRRQGVSIGRLHKQRKPDRRKRSR. Residues 702 to 727 are disordered; that stretch reads VSIGRLHKQRKPDRRKRSRPYKAKRQ. The segment at 711–727 is positively charged C-terminal extension (CTE); sequence RKPDRRKRSRPYKAKRQ. A Nuclear localization signal motif is present at residues 715–720; that stretch reads RRKRSR. The short motif at 715-722 is the Non-classical PY-nuclear localization signal (PY-NLS) element; that stretch reads RRKRSRPY.

This sequence belongs to the peptidase C12 family. BAP1 subfamily. As to quaternary structure, core component of the polycomb repressive deubiquitinase (PR-DUB) complex, at least composed of BAP1, one of ASXL1, ASXL2 or (probably) ASXL3, and one of MBD5 or MBD6. The PR-DUB core associates with a number of accessory proteins, including FOXK1, FOXK2, KDM1B, HCFC1, YY1 and OGT; KDM1B specifically associates with ASXL2 PR-DUB complexes. The BAP1 deubiquitinase activity is not required for PR-DUB assembly. Homodimerize (via coiled-coil hinge-region between the UCH and ULD domains) to mediate assembly of 2 copies of the BAP1-ASXL heterodimer into a bisymmetric tetramer; dimerization enhances association with nucleosomes. The PR-DUB complex associates with nucleosomes to mediate deubiquitination of 'lys-120' of histone H2AK118ub1 substrates; the association requires the positively charged C-terminal tail of BAP1. Interacts (via ULD domain) with ASXL1 (via DEUBAD domain); the interaction is direct and forms a ubiquitin binding cleft. The interaction with ASXL1 stabilizes BAP1 but is not required for nucleosome binding. Associates (via C-terminus) with nucleosome and chromatosome complexes through direct interaction with DNA and the histone3/4 dimer; this association displaces the histone-2A C-terminal tail, extending and orienting the H2AK118ub1 substrate towards the BAP1 deubiquitinase active site. Also interacts (via arginine finger) directly with the histone H2A-H2B acidic patch; this interaction is not critical for nucleosome-chromatosome association but may play a role in orienting the H2AK118ub1 substrate towards the PR-DUB complex active site. Interacts with BRCA1 (via the RING finger). Interacts (via HBM-like motif) with HCFC1. Interacts (via a C-terminal region overlapping the ULD domain) with YY1; the interaction is direct and requires the interaction with HCFC1. Interacts (when phosphorylated at Thr-491) with FOXK1. Interacts (when phosphorylated at Thr-491) with FOXK2; leading to recruitment of the PR-DUB complex and repression of FOXK2 target genes. Interacts (via non-classical PY-NLS) with TNPO1/transportin-1 (via HEAT repeats 8-12); the interaction is direct, mediates BAP1 nuclear localization and disrupts BAP1 homodimerization. Interacts (via C-terminus) with KPNA1/importin alpha5 and KPNA2/importin alpha1; these interactions can contribute to BAP1 nuclear localization but are less important than the interaction with TNPO1/transportin-1. The interaction with TNPO1/transportin-1 disrupts homodimerization and blocks ubiquitination by UBE2O. Post-translationally, ubiquitinated: monoubiquitinated at multiple sites within its nuclear localization signal (NLS) BY UBE2O, leading to cytoplasmic retention. Able to mediate autodeubiquitination via intramolecular interactions to counteract cytoplasmic retention. Monoubiquitinated on at least 4 sites near or within its PY-NLS.

The protein resides in the cytoplasm. It localises to the nucleus. The protein localises to the chromosome. It catalyses the reaction Thiol-dependent hydrolysis of ester, thioester, amide, peptide and isopeptide bonds formed by the C-terminal Gly of ubiquitin (a 76-residue protein attached to proteins as an intracellular targeting signal).. In terms of biological role, deubiquitinating enzyme that plays a key role in chromatin by mediating deubiquitination of histone H2A and HCFC1. Catalytic component of the polycomb repressive deubiquitinase (PR-DUB) complex, a complex that specifically mediates deubiquitination of histone H2A monoubiquitinated at 'Lys-120' (H2AK119ub1). Does not deubiquitinate monoubiquitinated histone H2B. The PR-DUB complex is an epigenetic regulator of gene expression and acts as a transcriptional coactivator, affecting genes involved in development, cell communication, signaling, cell proliferation and cell viability. Antagonizes PRC1 mediated H2AK119ub1 monoubiquitination. As part of the PR-DUB complex, associates with chromatin enriched in histone marks H3K4me1, H3K4me3, and H3K27Ac, but not in H3K27me3. Acts as a regulator of cell growth by mediating deubiquitination of HCFC1 N-terminal and C-terminal chains, with some specificity toward 'Lys-48'-linked polyubiquitin chains compared to 'Lys-63'-linked polyubiquitin chains. Deubiquitination of HCFC1 does not lead to increase stability of HCFC1. Interferes with the BRCA1 and BARD1 heterodimer activity by inhibiting their ability to mediate ubiquitination and autoubiquitination. It however does not mediate deubiquitination of BRCA1 and BARD1. Able to mediate autodeubiquitination via intramolecular interactions to counteract monoubiquitination at the nuclear localization signal (NLS), thereby protecting it from cytoplasmic sequestration. Acts as a tumor suppressor. Negatively regulates epithelial-mesenchymal transition (EMT) of trophoblast stem cells during placental development by regulating genes involved in epithelial cell integrity, cell adhesion and cytoskeletal organization. In Rattus norvegicus (Rat), this protein is Ubiquitin carboxyl-terminal hydrolase BAP1 (Bap1).